Consider the following 283-residue polypeptide: Formamidopyrimidine-DNA glycosylase (283 aa).

Residue P2 is the Schiff-base intermediate with DNA of the active site. The Proton donor role is filled by E3. Catalysis depends on K61, which acts as the Proton donor; for beta-elimination activity. 3 residues coordinate DNA: H94, R113, and K159. An FPG-type zinc finger spans residues 245 to 279 (DAYGREGESCRRCGAVMRREKFMNRSSFYCPKCQP). The active-site Proton donor; for delta-elimination activity is the R269.

Belongs to the FPG family. Monomer. It depends on Zn(2+) as a cofactor.

It carries out the reaction Hydrolysis of DNA containing ring-opened 7-methylguanine residues, releasing 2,6-diamino-4-hydroxy-5-(N-methyl)formamidopyrimidine.. The catalysed reaction is 2'-deoxyribonucleotide-(2'-deoxyribose 5'-phosphate)-2'-deoxyribonucleotide-DNA = a 3'-end 2'-deoxyribonucleotide-(2,3-dehydro-2,3-deoxyribose 5'-phosphate)-DNA + a 5'-end 5'-phospho-2'-deoxyribonucleoside-DNA + H(+). In terms of biological role, involved in base excision repair of DNA damaged by oxidation or by mutagenic agents. Acts as a DNA glycosylase that recognizes and removes damaged bases. Has a preference for oxidized purines, such as 7,8-dihydro-8-oxoguanine (8-oxoG). Has AP (apurinic/apyrimidinic) lyase activity and introduces nicks in the DNA strand. Cleaves the DNA backbone by beta-delta elimination to generate a single-strand break at the site of the removed base with both 3'- and 5'-phosphates. The protein is Formamidopyrimidine-DNA glycosylase of Mycobacterium avium (strain 104).